The following is a 158-amino-acid chain: uncharacterized protein (158 aa).

The signal sequence occupies residues 1–30 (MNKKFLKCGTLFLISCSILGSTIPAVTVFS).

This is an uncharacterized protein from Streptococcus pneumoniae serotype 2 (strain D39 / NCTC 7466).